A 350-amino-acid chain; its full sequence is Renin receptor (350 aa).

The signal sequence occupies residues 1 to 17 (MAVLVVLLFFLVAGALG). Residues 18-302 (NEFSILRSPG…YNLAYKYNLE (285 aa)) lie on the Extracellular side of the membrane. A helical transmembrane segment spans residues 303 to 323 (YSVVFNLVLWIMIGLALAVII). Topologically, residues 324–350 (TSYNIWNMDPGYDSIIYRMTNQKIRID) are cytoplasmic. A Mediates retrograde transport to the ER motif is present at residues 346-350 (KIRID).

In terms of assembly, interacts with renin. Accessory component of the multisubunit proton-transporting vacuolar (V)-ATPase protein pump. Interacts (via N-terminus) with ATP6AP1 (via N-terminus). Interacts with ATP6V0D1; ATP6V0D1 is a V-ATPase complex subunit and the interaction promotes V-ATPase complex assembly. Interacts with TMEM9; TMEM9 is a V-ATPase assembly regulator and the interaction induces the interaction with ATP6V0D1. Interacts with VMA21 (via N-terminus); VMA21 is a V-ATPase accessory component. Post-translationally, phosphorylated. In terms of processing, proteolytically cleaved by a furin-like convertase in the trans-Golgi network to generate N- and C-terminal fragments. As to expression, expressed in glutamatergic and GABAergic neurons with highest levels in the cortex, the hippocampus, the medial habenular nucleus, the cerebellum, the medulla and the olfactory bulb (at protein level).

Its subcellular location is the endoplasmic reticulum membrane. It localises to the lysosome membrane. It is found in the cytoplasmic vesicle. The protein localises to the autophagosome membrane. The protein resides in the cell projection. Its subcellular location is the dendritic spine membrane. It localises to the axon. It is found in the endosome membrane. The protein localises to the clathrin-coated vesicle membrane. The protein resides in the secretory vesicle. Its subcellular location is the synaptic vesicle membrane. Functionally, multifunctional protein which functions as a renin, prorenin cellular receptor and is involved in the assembly of the lysosomal proton-transporting V-type ATPase (V-ATPase) and the acidification of the endo-lysosomal system. May mediate renin-dependent cellular responses by activating ERK1 and ERK2. By increasing the catalytic efficiency of renin in AGT/angiotensinogen conversion to angiotensin I, may also play a role in the renin-angiotensin system (RAS). Through its function in V-type ATPase (v-ATPase) assembly and acidification of the lysosome it regulates protein degradation and may control different signaling pathways important for proper brain development, synapse morphology and synaptic transmission. The chain is Renin receptor from Mus musculus (Mouse).